Consider the following 440-residue polypeptide: Ribosomal protein uS12 methylthiotransferase RimO (440 aa).

The MTTase N-terminal domain occupies 6-116; the sequence is PKVGFVSLGC…VVTAVHEVVP (111 aa). [4Fe-4S] cluster contacts are provided by Cys15, Cys51, Cys80, Cys149, Cys153, and Cys156. Residues 135–373 form the Radical SAM core domain; sequence LTPRHYAYLK…MAHQQAISAA (239 aa). In terms of domain architecture, TRAM spans 376–440; it reads QLKVGKEIEV…DEYDLWAELV (65 aa).

The protein belongs to the methylthiotransferase family. RimO subfamily. [4Fe-4S] cluster serves as cofactor.

It is found in the cytoplasm. The catalysed reaction is L-aspartate(89)-[ribosomal protein uS12]-hydrogen + (sulfur carrier)-SH + AH2 + 2 S-adenosyl-L-methionine = 3-methylsulfanyl-L-aspartate(89)-[ribosomal protein uS12]-hydrogen + (sulfur carrier)-H + 5'-deoxyadenosine + L-methionine + A + S-adenosyl-L-homocysteine + 2 H(+). Its function is as follows. Catalyzes the methylthiolation of an aspartic acid residue of ribosomal protein uS12. In Pseudomonas aeruginosa (strain ATCC 15692 / DSM 22644 / CIP 104116 / JCM 14847 / LMG 12228 / 1C / PRS 101 / PAO1), this protein is Ribosomal protein uS12 methylthiotransferase RimO.